The sequence spans 2210 residues: Filamin-A (2210 aa).

2 Calponin-homology (CH) domains span residues 15–120 (KIQQ…LHYS) and 139–242 (HTPK…NSKL). Filamin repeat units lie at residues 249–347 (RPKT…PVKV), 349–447 (GHAG…PVKV), 448–544 (APLS…EVKV), 545–635 (GPKK…IAQI), 638–734 (RTDF…RVYV), 735–831 (GVPV…VVVE), 832–929 (QTVD…VVNV), 930–1022 (KSGC…RVLV), 1023–1121 (EETV…VMTV), 1122–1217 (FPKS…KLEA), 1218–1312 (FPTG…SIKA), 1322–1423 (SEYI…KFHV), 1424–1515 (DSIT…FAKI), 1516–1603 (TGEG…KVTV), 1606–1698 (REVG…TVKV), 1699–1796 (AGEG…QFTV), 1799–1891 (LRDS…KVYV), 1893–1986 (PDAG…RIKV), 1988–2079 (KDVA…KVNA), and 2116–2210 (TFKS…QIDV).

It belongs to the filamin family. As to quaternary structure, interacts with Ten-m. Germline-specific in females (at protein level). Expressed in ovary.

The protein resides in the cytoplasm. Its subcellular location is the cytoskeleton. It localises to the cell membrane. Involved in the germline ring canal formation. May tether actin microfilament within the ovarian ring canal to the cell membrane. Contributes to actin microfilaments organization. This is Filamin-A (cher) from Drosophila melanogaster (Fruit fly).